Here is a 297-residue protein sequence, read N- to C-terminus: MEIKNLTTEQRNPATMHIDSMSTIDMVKTINKEDQKVAVAVGTQDDKIAQAIDEAAKRYSKGGRLIYIGAGTSGRLGVLDAAELVPTYGIKPERAIGLIAGGKGAMYVAVEGAEDSQDLAKRDLKDLKLNKNDIVLGLAASGRTPYVIGGLDYAKAIGALTISIACVKDSKIGHHADIAIEAVVGPEAITGSTRMKAGTAQKMILNMISTGVMIKQGKVFENVMIDVKPTNSKLIDRACRIIQTTTGVSTPEARNTLEKANNDVGLAIVMLKTNSDLNQAKNLLKAENGNVAEVLNK.

The region spanning 55–218 (AAKRYSKGGR…STGVMIKQGK (164 aa)) is the SIS domain. Glutamate 83 acts as the Proton donor in catalysis. The active site involves glutamate 114.

It belongs to the GCKR-like family. MurNAc-6-P etherase subfamily. As to quaternary structure, homodimer.

The enzyme catalyses N-acetyl-D-muramate 6-phosphate + H2O = N-acetyl-D-glucosamine 6-phosphate + (R)-lactate. The protein operates within amino-sugar metabolism; N-acetylmuramate degradation. In terms of biological role, specifically catalyzes the cleavage of the D-lactyl ether substituent of MurNAc 6-phosphate, producing GlcNAc 6-phosphate and D-lactate. The protein is N-acetylmuramic acid 6-phosphate etherase of Lactobacillus gasseri (strain ATCC 33323 / DSM 20243 / BCRC 14619 / CIP 102991 / JCM 1131 / KCTC 3163 / NCIMB 11718 / NCTC 13722 / AM63).